A 292-amino-acid chain; its full sequence is Probable vesicular-fusion protein sec17 homolog (292 aa).

The protein belongs to the SNAP family.

It is found in the membrane. Functionally, required for vesicular transport between the endoplasmic reticulum and the Golgi apparatus. This Neurospora crassa (strain ATCC 24698 / 74-OR23-1A / CBS 708.71 / DSM 1257 / FGSC 987) protein is Probable vesicular-fusion protein sec17 homolog.